The primary structure comprises 220 residues: Iron-sulfur cluster repair protein YtfE (220 aa).

It belongs to the RIC family. YtfE subfamily. As to quaternary structure, homodimer.

It localises to the cytoplasm. In terms of biological role, di-iron-containing protein involved in the repair of iron-sulfur clusters damaged by oxidative and nitrosative stress conditions. This is Iron-sulfur cluster repair protein YtfE from Salmonella schwarzengrund (strain CVM19633).